Here is a 324-residue protein sequence, read N- to C-terminus: Zinc transporter ZIP1 (324 aa).

Residues 1-30 (MGPWGEPELLVWRPEAVASEPPVPVGLEVK) lie on the Extracellular side of the membrane. Residues 31–51 (LGALVLLLVLTLLCSLVPICV) form a helical membrane-spanning segment. Residues 52–68 (LRRPGANHEGSASRQKA) lie on the Cytoplasmic side of the membrane. A helical transmembrane segment spans residues 69–89 (LSLVSCFAGGVFLATCLLDLL). At 90-104 (PDYLAAIDEALAALH) the chain is on the extracellular side. Residues 105–125 (VTLQFPLQEFILAMGFFLVLV) form a helical membrane-spanning segment. The Cytoplasmic segment spans residues 126–179 (MEQITLAYKEQSGPSPLEETRALLGTVNGGPQHWHDGPGVPQASGAPATPSALR). The helical transmembrane segment at 180 to 200 (ACVLVFSLALHSVFEGLAVGL) threads the bilayer. The Extracellular portion of the chain corresponds to 201–206 (QRDRAR). The helical transmembrane segment at 207–227 (AMELCLALLLHKGILAVSLSL) threads the bilayer. The Cytoplasmic segment spans residues 228–237 (RLLQSHLRAQ). Residues 238-258 (VVAGCGILFSCMTPLGIGLGA) traverse the membrane as a helical segment. Residues 259–272 (ALAESAGPLHQLAQ) lie on the Extracellular side of the membrane. A helical membrane pass occupies residues 273–293 (SVLEGMAAGTFLYITFLEILP). At 294–303 (QELASSEQRI) the chain is on the cytoplasmic side. The helical transmembrane segment at 304–324 (LKVILLLAGFALLTGLLFIQI) threads the bilayer.

The protein belongs to the ZIP transporter (TC 2.A.5) family. In terms of tissue distribution, ubiquitous. Expressed in most adult and fetal tissues including the epidermis.

The protein localises to the cell membrane. It is found in the endoplasmic reticulum membrane. The enzyme catalyses Zn(2+)(in) = Zn(2+)(out). With respect to regulation, inhibited by Ni(2+) ions. Fe(2+) ions do not inhibit zinc uptake. Transporter for the divalent cation Zn(2+). Mediates the influx of Zn(2+) into cells from extracellular space. Functions as the major importer of zinc from circulating blood plasma into prostate cells. The polypeptide is Zinc transporter ZIP1 (Homo sapiens (Human)).